A 742-amino-acid chain; its full sequence is Probable serine/threonine-protein kinase PkwA (742 aa).

The Protein kinase domain occupies 16 to 266 (YRLVSRLGAG…TAELLAQLST (251 aa)). Residues 22-30 (LGAGGMGQV) and Lys-44 contribute to the ATP site. Residue Asp-138 is the Proton acceptor of the active site. Positions 266–394 (TDHTGDDWPP…PWSPPRVQPP (129 aa)) are disordered. Pro residues predominate over residues 301-318 (EPPPPSHGPPRPSEPLPD). A compositionally biased stretch (basic and acidic residues) spans 343–356 (LEEKPIQVIHEPER). The span at 377–392 (PRPAAPQPPWSPPRVQ) shows a compositional bias: pro residues. WD repeat units follow at residues 455 to 496 (ILTT…ELHT), 497 to 538 (LEGH…ERAV), 539 to 580 (FEGH…EHAV), 581 to 621 (LKGH…KERD), 622 to 663 (VLQA…ALHT), 664 to 705 (FEGH…EHTT), and 706 to 742 (LEGH…IATE).

It belongs to the protein kinase superfamily. Ser/Thr protein kinase family.

The catalysed reaction is L-seryl-[protein] + ATP = O-phospho-L-seryl-[protein] + ADP + H(+). It carries out the reaction L-threonyl-[protein] + ATP = O-phospho-L-threonyl-[protein] + ADP + H(+). May play a regulatory role during the complex growth cycle and in secondary metabolite production. The chain is Probable serine/threonine-protein kinase PkwA (pkwA) from Thermomonospora curvata.